The chain runs to 33 residues: Gastrin (33 aa).

Residues Gln-1 and Gln-18 each carry the pyrrolidone carboxylic acid modification. Residue Tyr-28 is modified to Sulfotyrosine. Phe-33 carries the phenylalanine amide modification.

The protein belongs to the gastrin/cholecystokinin family.

Its subcellular location is the secreted. In terms of biological role, gastrin stimulates the stomach mucosa to produce and secrete hydrochloric acid and the pancreas to secrete its digestive enzymes. It also stimulates smooth muscle contraction and increases blood circulation and water secretion in the stomach and intestine. The protein is Gastrin (GAST) of Didelphis virginiana (North American opossum).